The primary structure comprises 72 residues: Guanine nucleotide-binding protein G(I)/G(S)/G(O) subunit gamma-12 (72 aa).

S2 bears the N-acetylserine mark. Phosphoserine occurs at positions 10 and 26. Y42 is modified (phosphotyrosine). S49 is subject to Phosphoserine. C69 bears the Cysteine methyl ester mark. A lipid anchor (S-geranylgeranyl cysteine) is attached at C69. Positions 70–72 (IIL) are cleaved as a propeptide — removed in mature form.

This sequence belongs to the G protein gamma family. G proteins are composed of 3 units, alpha, beta and gamma.

The protein localises to the cell membrane. Functionally, guanine nucleotide-binding proteins (G proteins) are involved as a modulator or transducer in various transmembrane signaling systems. The beta and gamma chains are required for the GTPase activity, for replacement of GDP by GTP, and for G protein-effector interaction. This is Guanine nucleotide-binding protein G(I)/G(S)/G(O) subunit gamma-12 (Gng12) from Mus musculus (Mouse).